Consider the following 174-residue polypeptide: uncharacterized protein (174 aa).

Belongs to the gamma-class carbonic anhydrase family.

This is an uncharacterized protein from Pseudomonas aeruginosa (strain ATCC 15692 / DSM 22644 / CIP 104116 / JCM 14847 / LMG 12228 / 1C / PRS 101 / PAO1).